A 462-amino-acid chain; its full sequence is Siroheme synthase (462 aa).

A precorrin-2 dehydrogenase /sirohydrochlorin ferrochelatase region spans residues 1–201 (MQFLPLFHKL…GKPEEGERLL (201 aa)). NAD(+) contacts are provided by residues 22-23 (EV) and 43-44 (PE). S126 carries the post-translational modification Phosphoserine. Residues 214–462 (GEVYLVGAGP…AWFEGAQGSL (249 aa)) are uroporphyrinogen-III C-methyltransferase. P223 lines the S-adenosyl-L-methionine pocket. Residue D246 is the Proton acceptor of the active site. The Proton donor role is filled by K268. S-adenosyl-L-methionine is bound by residues 299–301 (GGD), I304, 329–330 (TA), M381, and G410.

In the N-terminal section; belongs to the precorrin-2 dehydrogenase / sirohydrochlorin ferrochelatase family. It in the C-terminal section; belongs to the precorrin methyltransferase family.

It catalyses the reaction uroporphyrinogen III + 2 S-adenosyl-L-methionine = precorrin-2 + 2 S-adenosyl-L-homocysteine + H(+). The enzyme catalyses precorrin-2 + NAD(+) = sirohydrochlorin + NADH + 2 H(+). The catalysed reaction is siroheme + 2 H(+) = sirohydrochlorin + Fe(2+). Its pathway is cofactor biosynthesis; adenosylcobalamin biosynthesis; precorrin-2 from uroporphyrinogen III: step 1/1. It participates in cofactor biosynthesis; adenosylcobalamin biosynthesis; sirohydrochlorin from precorrin-2: step 1/1. It functions in the pathway porphyrin-containing compound metabolism; siroheme biosynthesis; precorrin-2 from uroporphyrinogen III: step 1/1. The protein operates within porphyrin-containing compound metabolism; siroheme biosynthesis; siroheme from sirohydrochlorin: step 1/1. Its pathway is porphyrin-containing compound metabolism; siroheme biosynthesis; sirohydrochlorin from precorrin-2: step 1/1. Functionally, multifunctional enzyme that catalyzes the SAM-dependent methylations of uroporphyrinogen III at position C-2 and C-7 to form precorrin-2 via precorrin-1. Then it catalyzes the NAD-dependent ring dehydrogenation of precorrin-2 to yield sirohydrochlorin. Finally, it catalyzes the ferrochelation of sirohydrochlorin to yield siroheme. The sequence is that of Siroheme synthase from Ectopseudomonas mendocina (strain ymp) (Pseudomonas mendocina).